The primary structure comprises 484 residues: MLIFELSKTGRQAKAQIPRAVSKNYSIPEEFQRKSPPRLPACSELQVVRHFTCLSQKNFSIDTNFYPLGSCTMKYNPRGVHKAASLPGFINRHPLAMDNESQGFLETLYKLQNYISEITGMPGVSLTPMAGSQGEFAGVAMIKAYHQSRGDTARDEILIPDAAHGTNPASAVMCGFKVVEIATAPDGDIDLDELKRKVGPRTAGIMLTNPSTLGLFMRQIKEIASLVHQAGGLLYYDGANLNAILGKVRPGDMGFDVMHLNLHKTFATPHGGGGPGAGPVAVGKRLIPYMPLPVVKKTDSGYHWATRQDYPQSIGRLSCFMGNAGILLRAYFYMLVLGKEGLLRVSEFATLNANYLLKELTKVGYTAAYPDRRASHEFILTLNSEKKNYDVTAMDFAKRLLDYGVHAPTTYFPLLVPECLLIEPPETESKEELDAFVAVMKIIREEASKQPDILKAAPHTLPVKRLDDVKAARELDLNYFATHE.

N6-(pyridoxal phosphate)lysine is present on lysine 264.

This sequence belongs to the GcvP family. C-terminal subunit subfamily. As to quaternary structure, the glycine cleavage system is composed of four proteins: P, T, L and H. In this organism, the P 'protein' is a heterodimer of two subunits. The cofactor is pyridoxal 5'-phosphate.

The enzyme catalyses N(6)-[(R)-lipoyl]-L-lysyl-[glycine-cleavage complex H protein] + glycine + H(+) = N(6)-[(R)-S(8)-aminomethyldihydrolipoyl]-L-lysyl-[glycine-cleavage complex H protein] + CO2. Functionally, the glycine cleavage system catalyzes the degradation of glycine. The P protein binds the alpha-amino group of glycine through its pyridoxal phosphate cofactor; CO(2) is released and the remaining methylamine moiety is then transferred to the lipoamide cofactor of the H protein. The sequence is that of Probable glycine dehydrogenase (decarboxylating) subunit 2 from Legionella pneumophila subsp. pneumophila (strain Philadelphia 1 / ATCC 33152 / DSM 7513).